The sequence spans 44 residues: Small, acid-soluble spore protein P (44 aa).

The tract at residues 1–44 is disordered; the sequence is MSHTMGKNNREAKEKKGQPEPLSGSHKVKNRNHSRQKHHAHHDM. Positions 8–18 are enriched in basic and acidic residues; sequence NNREAKEKKGQ. The segment covering 26 to 44 has biased composition (basic residues); the sequence is HKVKNRNHSRQKHHAHHDM.

It belongs to the SspP family.

It is found in the spore core. The chain is Small, acid-soluble spore protein P from Bacillus cereus (strain ATCC 14579 / DSM 31 / CCUG 7414 / JCM 2152 / NBRC 15305 / NCIMB 9373 / NCTC 2599 / NRRL B-3711).